Here is a 450-residue protein sequence, read N- to C-terminus: MVNSKRQQRSKKVASSSKVPPTKGRTFTGCWACRFKKRRCDENRPICSLCAKHGDNCSYDIRLMWLEENIYKVRKHSLISSLQARKSKSKPLCQKISKSRFKQMTHFRQLSPPTSDCEDSVHEASKETTLPNDNTFTISVRRLKIYNNAVASVFGSMTNRDYTQKRIDKKLDELLNMVENDISVVNLNCSKHGPYSVFRANPAAVTSALTDQLPSPGHSMSSAEETTTAALSSPPEDSTSLIDIIQGKIFGILWFNCYGNMILNRQEYTTWFINKMRNSLTTEFIRFLGKIIDDPDINMASCLFKECIARWSCVDWQSIAITMLVIIHGYTCPNLTKLLRVWFLQQKLLRFSMYPLVNFIINNTQDLDVLYHCNGLLGNADLFEDPYQDELTSELHVLVTERLVNSWKDTILQQLCSCQDTTLSCSQLRYWQLQLKCNQQFYKDVYAMQD.

Basic residues predominate over residues 1–12 (MVNSKRQQRSKK). A disordered region spans residues 1 to 23 (MVNSKRQQRSKKVASSSKVPPTK). The span at 13–23 (VASSSKVPPTK) shows a compositional bias: low complexity. The zn(2)-C6 fungal-type DNA-binding region spans 30 to 57 (CWACRFKKRRCDENRPICSLCAKHGDNC). Positions 210–234 (TDQLPSPGHSMSSAEETTTAALSSP) are disordered.

The protein resides in the nucleus. Its function is as follows. Positive regulator of thiamine biosynthesis. This is Thiamine biosynthesis regulatory protein (THI2) from Saccharomyces cerevisiae (strain ATCC 204508 / S288c) (Baker's yeast).